The sequence spans 609 residues: Zinc metalloproteinase-disintegrin-like (609 aa).

A signal peptide spans 1–20 (MIQVLLVTICLAALPYQGSS). The propeptide occupies 21-189 (IILESGNVND…KKASQLVVTA (169 aa)). The region spanning 198 to 393 (RFVELVLVVD…QNPECIVNEP (196 aa)) is the Peptidase M12B domain. Ca(2+)-binding residues include Glu201 and Asp285. Disulfide bonds link Cys308–Cys388, Cys348–Cys372, and Cys350–Cys355. His333 provides a ligand contact to Zn(2+). Glu334 is an active-site residue. Residues His337 and His343 each coordinate Zn(2+). N-linked (GlcNAc...) asparagine glycosylation occurs at Asn371. Ca(2+) is bound by residues Cys388, Asn391, Val403, Asn406, Leu408, Glu410, Glu413, and Asp416. In terms of domain architecture, Disintegrin spans 401-487 (PPVCGNELLE…ECPADVFHKN (87 aa)). 14 cysteine pairs are disulfide-bonded: Cys404–Cys433, Cys415–Cys428, Cys417–Cys423, Cys427–Cys450, Cys441–Cys447, Cys446–Cys472, Cys459–Cys479, Cys466–Cys498, Cys491–Cys503, Cys510–Cys560, Cys525–Cys571, Cys538–Cys548, Cys555–Cys597, and Cys591–Cys602. The short motif at 465 to 467 (ECD) is the D/ECD-tripeptide element. Residues Asp467, Pro468, Glu470, Asp482, and Val483 each contribute to the Ca(2+) site.

This sequence belongs to the venom metalloproteinase (M12B) family. P-III subfamily. P-IIIa sub-subfamily. In terms of assembly, monomer. The cofactor is Zn(2+). Expressed by the venom gland.

Its subcellular location is the secreted. Functionally, this protein is a zinc metalloprotease from snake venom that possesses hemorrhagic activity. This Crotalus durissus durissus (Central American rattlesnake) protein is Zinc metalloproteinase-disintegrin-like.